A 186-amino-acid chain; its full sequence is ATP synthase subunit b, chloroplastic (186 aa).

Residues 27–43 (IFETNILNLAVVLGILL) traverse the membrane as a helical segment.

It belongs to the ATPase B chain family. As to quaternary structure, F-type ATPases have 2 components, F(1) - the catalytic core - and F(0) - the membrane proton channel. F(1) has five subunits: alpha(3), beta(3), gamma(1), delta(1), epsilon(1). F(0) has four main subunits: a(1), b(1), b'(1) and c(10-14). The alpha and beta chains form an alternating ring which encloses part of the gamma chain. F(1) is attached to F(0) by a central stalk formed by the gamma and epsilon chains, while a peripheral stalk is formed by the delta, b and b' chains.

It localises to the plastid. Its subcellular location is the chloroplast thylakoid membrane. Its function is as follows. F(1)F(0) ATP synthase produces ATP from ADP in the presence of a proton or sodium gradient. F-type ATPases consist of two structural domains, F(1) containing the extramembraneous catalytic core and F(0) containing the membrane proton channel, linked together by a central stalk and a peripheral stalk. During catalysis, ATP synthesis in the catalytic domain of F(1) is coupled via a rotary mechanism of the central stalk subunits to proton translocation. In terms of biological role, component of the F(0) channel, it forms part of the peripheral stalk, linking F(1) to F(0). This chain is ATP synthase subunit b, chloroplastic, found in Mesostigma viride (Green alga).